The primary structure comprises 232 residues: Small ribosomal subunit protein uS3 (232 aa).

The region spanning 39–107 (VRQFLTKELA…PAQINIAEVR (69 aa)) is the KH type-2 domain.

Belongs to the universal ribosomal protein uS3 family. In terms of assembly, part of the 30S ribosomal subunit. Forms a tight complex with proteins S10 and S14.

In terms of biological role, binds the lower part of the 30S subunit head. Binds mRNA in the 70S ribosome, positioning it for translation. The protein is Small ribosomal subunit protein uS3 of Yersinia pseudotuberculosis serotype O:1b (strain IP 31758).